The chain runs to 900 residues: Translation initiation factor IF-2 (900 aa).

2 disordered regions span residues Gly30–Lys77 and Asn89–Met291. The span at Asn89–Thr112 shows a compositional bias: low complexity. Residues Pro113–Pro129 show a composition bias toward pro residues. The span at Pro175–Ala187 shows a compositional bias: low complexity. The segment covering Gly215–Gly271 has biased composition (gly residues). Residues Arg275–Lys284 are compositionally biased toward basic residues. A tr-type G domain is found at Val396–Leu567. A G1 region spans residues Gly405–Thr412. A GTP-binding site is contributed by Gly405–Thr412. The G2 stretch occupies residues Gly430–His434. The G3 stretch occupies residues Asp455 to Gly458. Residues Asp455–His459 and Asn509–Asp512 each bind GTP. The tract at residues Asn509–Asp512 is G4. The G5 stretch occupies residues Ser545–Lys547.

It belongs to the TRAFAC class translation factor GTPase superfamily. Classic translation factor GTPase family. IF-2 subfamily.

It localises to the cytoplasm. One of the essential components for the initiation of protein synthesis. Protects formylmethionyl-tRNA from spontaneous hydrolysis and promotes its binding to the 30S ribosomal subunits. Also involved in the hydrolysis of GTP during the formation of the 70S ribosomal complex. This is Translation initiation factor IF-2 from Mycobacterium bovis (strain BCG / Pasteur 1173P2).